The sequence spans 401 residues: ADP-forming sulfoacetate-CoA ligase subunit SqwK (401 aa).

An ATP-grasp domain is found at 9–217 (KTVFSEHKIP…DNSVFRQPRF (209 aa)). 35–96 (KSVGFPSVVK…EEAVHIDKEI (62 aa)) lines the ATP pocket. Residues E185 and N187 each coordinate Mg(2+).

It belongs to the succinate/malate CoA ligase beta subunit family. In terms of assembly, forms a complex with SqwL. Requires Mg(2+) as cofactor.

The enzyme catalyses sulfoacetate + ATP + CoA = sulfoacetyl-CoA + ADP + phosphate. Its function is as follows. Part of a variant of the sulfo-TK pathway, a D-sulfoquinovose degradation pathway that produces sulfoacetate. Hydrolyzes sulfoacetyl-coenzyme A (sulfoacetyl-CoA) to produce sulfoacetate and CoA coupled with the phosphorylation of ADP to generate ATP. Cannot use succinate, acetate or 3-hydroxypropionate, and shows only residual activities with malonate and 3-sulfopropanoate. This is ADP-forming sulfoacetate-CoA ligase subunit SqwK from Acholeplasma sp.